The sequence spans 519 residues: Cytosol aminopeptidase (519 aa).

Position 42 is a phosphoserine (Ser42). Lys45 carries the post-translational modification N6-succinyllysine. The residue at position 54 (Ser54) is a Phosphoserine. Residues Lys61 and Lys103 each carry the N6-succinyllysine modification. A phosphoserine mark is found at Ser180 and Ser194. Zn(2+) is bound by residues Leu202, Met203, and Thr205. Ser238 is subject to Phosphoserine. Zn(2+)-binding residues include Lys282 and Asp287. Residues Lys282, Asp287, Ser292, and Lys294 each contribute to the substrate site. Asp287 is a binding site for Mg(2+). Residue Lys294 is part of the active site. Arg303, Asp305, Asp364, and Glu366 together coordinate Zn(2+). Substrate contacts are provided by Asp305 and Asp364. Positions 364 and 366 each coordinate Mg(2+). Residue Arg368 is part of the active site. Lys455 is modified (N6-acetyllysine; alternate). Residue Lys455 is modified to N6-succinyllysine; alternate. Lys476 carries the post-translational modification N6-succinyllysine. Lys489 bears the N6-acetyllysine; alternate mark. N6-succinyllysine; alternate is present on Lys489.

Belongs to the peptidase M17 family. Homohexamer. It depends on Zn(2+) as a cofactor. Mn(2+) is required as a cofactor.

The protein localises to the cytoplasm. The catalysed reaction is Release of an N-terminal amino acid, Xaa-|-Yaa-, in which Xaa is preferably Leu, but may be other amino acids including Pro although not Arg or Lys, and Yaa may be Pro. Amino acid amides and methyl esters are also readily hydrolyzed, but rates on arylamides are exceedingly low.. The enzyme catalyses an S-substituted L-cysteinylglycine + H2O = an S-substituted L-cysteine + glycine. It carries out the reaction L-cysteinylglycine + H2O = L-cysteine + glycine. It catalyses the reaction S-benzyl-L-cysteinylglycine + H2O = S-benzyl-L-cysteine + glycine. The catalysed reaction is Release of N-terminal proline from a peptide.. Zofenoprilat inhibits Cys-Gly hydrolysis activity. Its function is as follows. Cytosolic metallopeptidase that catalyzes the removal of unsubstituted N-terminal hydrophobic amino acids from various peptides. The presence of Zn(2+) ions is essential for the peptidase activity, and the association with other cofactors can modulate the substrate spectificity of the enzyme. For instance, in the presence of Mn(2+), it displays a specific Cys-Gly hydrolyzing activity of Cys-Gly-S-conjugates. Involved in the metabolism of glutathione and in the degradation of glutathione S-conjugates, which may play a role in the control of the cell redox status. The protein is Cytosol aminopeptidase of Bos taurus (Bovine).